We begin with the raw amino-acid sequence, 24 residues long: Coenzyme PQQ synthesis protein A (24 aa).

The pyrroloquinoline quinone (Glu-Tyr) cross-link spans 16–20; it reads EITMY.

Belongs to the PqqA family.

The protein operates within cofactor biosynthesis; pyrroloquinoline quinone biosynthesis. Required for coenzyme pyrroloquinoline quinone (PQQ) biosynthesis. PQQ is probably formed by cross-linking a specific glutamate to a specific tyrosine residue and excising these residues from the peptide. In Cupriavidus taiwanensis (strain DSM 17343 / BCRC 17206 / CCUG 44338 / CIP 107171 / LMG 19424 / R1) (Ralstonia taiwanensis (strain LMG 19424)), this protein is Coenzyme PQQ synthesis protein A.